The chain runs to 335 residues: 2-acylglycerol O-acyltransferase 1 (335 aa).

A run of 2 helical transmembrane segments spans residues W24–L44 and L47–A67. Residues N77, N125, and N180 are each glycosylated (N-linked (GlcNAc...) asparagine).

The protein belongs to the diacylglycerol acyltransferase family.

The protein resides in the endoplasmic reticulum membrane. It carries out the reaction a 2-acylglycerol + an acyl-CoA = a 1,2-diacylglycerol + CoA. The catalysed reaction is a 2-acylglycerol + an acyl-CoA = a 1,2-diacyl-sn-glycerol + CoA. The enzyme catalyses a 2-acylglycerol + an acyl-CoA = a 2,3-diacyl-sn-glycerol + CoA. It catalyses the reaction a 1-acylglycerol + an acyl-CoA = a 1,2-diacylglycerol + CoA. It carries out the reaction a 1-acylglycerol + an acyl-CoA = a 1,3-diacylglycerol + CoA. The catalysed reaction is a 1-acyl-sn-glycerol + an acyl-CoA = a 1,3-diacyl-sn-glycerol + CoA. The enzyme catalyses a 3-acyl-sn-glycerol + an acyl-CoA = a 1,3-diacyl-sn-glycerol + CoA. Its pathway is glycerolipid metabolism; triacylglycerol biosynthesis. Functionally, involved in glycerolipid synthesis and lipid metabolism. Catalyzes the formation of diacylglycerol, the precursor of triacylglycerol, by transferring the acyl chain of a fatty acyl-CoA to a monoacylglycerol, mainly at the sn-1 or sn-3 positions. It uses both sn-2-monoacylglycerol (2-acylglycerol) and sn-1-monoacylglycerol (1-acyl-sn-glycerol) equally well as substrates, and uses sn-3-monoacylglycerol (3-acyl-sn-glycerol) with lower efficiency. The polypeptide is 2-acylglycerol O-acyltransferase 1 (mogat1) (Xenopus tropicalis (Western clawed frog)).